The primary structure comprises 218 residues: Adenylate kinase (218 aa).

Position 10 to 15 (10 to 15) interacts with ATP; sequence GAGKGT. Residues 30-59 form an NMP region; sequence STGNMLRAAVKAGTPLGLEAKKVMDAGGLV. AMP-binding positions include Thr31, Arg36, 57–59, 85–88, and Gln92; these read GLV and GFPR. The interval 122–159 is LID; the sequence is GRRVHPASGRSYHVRFNPPKAEGVDDVTGEPLVQRDDD. Residues Arg123 and 132 to 133 each bind ATP; that span reads SY. Arg156 and Arg167 together coordinate AMP. Gly203 lines the ATP pocket.

It belongs to the adenylate kinase family. As to quaternary structure, monomer.

It localises to the cytoplasm. It catalyses the reaction AMP + ATP = 2 ADP. It functions in the pathway purine metabolism; AMP biosynthesis via salvage pathway; AMP from ADP: step 1/1. Functionally, catalyzes the reversible transfer of the terminal phosphate group between ATP and AMP. Plays an important role in cellular energy homeostasis and in adenine nucleotide metabolism. This is Adenylate kinase from Bordetella parapertussis (strain 12822 / ATCC BAA-587 / NCTC 13253).